The sequence spans 596 residues: CRISPR-associated DNA-binding protein Cas12m (596 aa).

The tract at residues 19–53 is recognition domain (REC1-N); the sequence is EVLRQQLWLAHNLREDLVSLQLAYDDDLKAIWSSY. The interval 54–121 is recognition domain (REC2); sequence PDVAQAEDTM…RDAIAVVKDD (68 aa). 2 coiled-coil regions span residues 55-83 and 91-117; these read DVAQ…ARIE and TELT…AIAV. Residues 122-190 are recognition domain (REC1-C); sequence AAERRKARSD…LRHHRFDGSG (69 aa). The interval 191–302 is wedge domain (WED); that stretch reads TIAVQLQRQA…RAKLCVTARI (112 aa). The interval 303–313 is linker; the sequence is GDTEPVTSGPT. A ruvC-I region spans residues 314–541; the sequence is VALHLGWRST…RDGVPVTIVA (228 aa). His-317 contributes to the Mg(2+) binding site. The segment at 541–577 is target nucleic-acid binding (TNB); that stretch reads AAADFTRTHSRCGHVNPADDRYLSNPVRCDGCGAMYD. Zn(2+) is bound by residues His-549, Cys-552, Cys-569, and Cys-572. The tract at residues 578–596 is ruvC-II; sequence QDRSFVTLMLRAATAPSNP. Asp-579 contributes to the Mg(2+) binding site.

This sequence belongs to the CRISPR-associated DNA-binding protein Cas12m family. As to quaternary structure, binds crRNA and target dsDNA as a monomer. Mg(2+) is required as a cofactor. Requires Zn(2+) as cofactor.

In terms of biological role, CRISPR (clustered regularly interspaced short palindromic repeat), is an adaptive immune system that provides protection against mobile genetic elements (viruses, transposable elements and conjugative plasmids). CRISPR clusters contain sequences complementary to antecedent mobile elements and target invading nucleic acids. CRISPR clusters are transcribed and processed into CRISPR RNA (crRNA). Recognizes a short motif in the CRISPR repeat sequences (the 5' PAM or protospacer adjacent motif, 5'-TTN-3' in this organism) to help distinguish self versus nonself, as targets within the bacterial CRISPR locus do not have PAMs. Upon expression in E.coli as a CRISPR locus inhibits plasmid propagation when targeted to regions essential for plasmid propagation (replication origin and dnaA). The crRNA-Cas12m complex inhibits transcription from target DNA leading to gene silencing. Cas12m-crRNA binds DNA in a PAM-dependent, crRNA-guided fashion. Binds a 17-bp crRNA-ss-target DNA heteroduplex, in a 56 nucleotide crRNA. No dsDNA, ssDNA or RNA nuclease activity is seen for the crRNA-Cas12m complex. Is required to process pre-crRNA to mature crRNA without a tracrRNA. Upon expression in E.coli as a CRISPR region preferentially binds to its associated crRNA. This chain is CRISPR-associated DNA-binding protein Cas12m, found in Mycolicibacterium mucogenicum (Mycobacterium mucogenicum).